The chain runs to 234 residues: 2,3,4,5-tetrahydropyridine-2,6-dicarboxylate N-acetyltransferase (234 aa).

Belongs to the transferase hexapeptide repeat family. DapH subfamily.

It carries out the reaction (S)-2,3,4,5-tetrahydrodipicolinate + acetyl-CoA + H2O = L-2-acetamido-6-oxoheptanedioate + CoA. Its pathway is amino-acid biosynthesis; L-lysine biosynthesis via DAP pathway; LL-2,6-diaminopimelate from (S)-tetrahydrodipicolinate (acetylase route): step 1/3. Its function is as follows. Catalyzes the transfer of an acetyl group from acetyl-CoA to tetrahydrodipicolinate. This is 2,3,4,5-tetrahydropyridine-2,6-dicarboxylate N-acetyltransferase from Ligilactobacillus salivarius (strain UCC118) (Lactobacillus salivarius).